Here is a 483-residue protein sequence, read N- to C-terminus: Replication factor C large subunit (483 aa).

44–51 (GSPGVGKT) lines the ATP pocket. The interval 415–483 (AVDHGGGIFA…DGQAGLSDFM (69 aa)) is disordered. A compositionally biased stretch (acidic residues) spans 430–443 (AQSDTESDDDDDGD). Residues 451-463 (DEPKEESVNREQS) are compositionally biased toward basic and acidic residues.

It belongs to the activator 1 small subunits family. RfcL subfamily. In terms of assembly, heteromultimer composed of small subunits (RfcS) and large subunits (RfcL).

In terms of biological role, part of the RFC clamp loader complex which loads the PCNA sliding clamp onto DNA. The sequence is that of Replication factor C large subunit from Natronomonas pharaonis (strain ATCC 35678 / DSM 2160 / CIP 103997 / JCM 8858 / NBRC 14720 / NCIMB 2260 / Gabara) (Halobacterium pharaonis).